We begin with the raw amino-acid sequence, 123 residues long: Fluoride-specific ion channel FluC (123 aa).

The next 4 helical transmembrane spans lie at valine 5–valine 25, leucine 33–phenylalanine 53, leucine 62–alanine 82, and isoleucine 94–glycine 114. Na(+)-binding residues include glycine 72 and serine 75.

The protein belongs to the fluoride channel Fluc/FEX (TC 1.A.43) family.

It is found in the cell inner membrane. The enzyme catalyses fluoride(in) = fluoride(out). With respect to regulation, na(+) is not transported, but it plays an essential structural role and its presence is essential for fluoride channel function. Fluoride-specific ion channel. Important for reducing fluoride concentration in the cell, thus reducing its toxicity. The chain is Fluoride-specific ion channel FluC from Ignicoccus hospitalis (strain KIN4/I / DSM 18386 / JCM 14125).